The primary structure comprises 577 residues: AP-1-like transcription factor napA (577 aa).

Positions 25-178 (ALSSNNPPSK…RAFRERKEKH (154 aa)) are disordered. Over residues 26 to 64 (LSSNNPPSKQKQNVQKPELGTNPTNTPGQASTGSFNTSP) the composition is skewed to polar residues. Composition is skewed to basic and acidic residues over residues 109-121 (SDDH…RKDS) and 133-144 (RESDDKSDDKTS). Short sequence motifs (bipartite nuclear localization signal) lie at residues 117 to 124 (KRKDSNSN) and 144 to 151 (SKKPGRKP). Residues 154 to 217 (SEPTSKRKAQ…ERLQVELREY (64 aa)) form the bZIP domain. The interval 159 to 180 (KRKAQNRAAQRAFRERKEKHLK) is basic motif. The segment at 182-189 (LEAKVEEL) is leucine-zipper. The tract at residues 294 to 386 (QAANGRASSS…NQAKESHEGH (93 aa)) is disordered. Residues 299 to 319 (RASSSASPKTVTSNNPATKSP) show a composition bias toward polar residues. Residues 347 to 364 (TSDSPSSSSDSHQFLSSS) show a composition bias toward low complexity. Positions 365 to 377 (GTSPEPSVQSPDN) are enriched in polar residues. The tract at residues 525–558 (CTKIWDRLQSMEKFRNGEIDVDNLCSELRTKARC) is c-CRD. A Nuclear export signal motif is present at residues 543-550 (IDVDNLCS).

Belongs to the bZIP family. YAP subfamily. Post-translationally, oxidative stress induces conformational changes through oxidation of cysteine residues, masking the nuclear export signal, thus abolishing nuclear export by CRM1/exportin 1.

The protein resides in the nucleus. It localises to the cytoplasm. Its function is as follows. Transcription activator involved in oxidative stress response, specifically during hyphal growth. Regulates the transcription of genes encoding antioxidant enzymes and components of the cellular thiol-reducing pathways including the mycelium-specific catalase catB (but not the conidia-specific catalase catA), thioredoxin reductase trxB and thioredoxin thiO. Preferentially binds to promoters with the core binding site 5'-TTA[CG]TAA-3'. Activity of the transcription factor is controlled through oxidation of specific cysteine residues resulting in the alteration of its subcellular location. Activation by hydroperoxides induces nuclear accumulation and as a result NapA transcriptional activity. In Emericella nidulans (strain FGSC A4 / ATCC 38163 / CBS 112.46 / NRRL 194 / M139) (Aspergillus nidulans), this protein is AP-1-like transcription factor napA.